We begin with the raw amino-acid sequence, 362 residues long: Ferredoxin--NADP reductase, leaf-type isozyme, chloroplastic (362 aa).

The tract at residues 1 to 20 (MATAVSAAVSLPSSKSTSFS) is disordered. A chloroplast-targeting transit peptide spans 1–62 (MATAVSAAVS…RAQVTTEAPA (62 aa)). Positions 10–20 (SLPSSKSTSFS) are enriched in low complexity. In terms of domain architecture, FAD-binding FR-type spans 83–205 (KEPYVGRCLL…TGPVGKEMLM (123 aa)). FAD contacts are provided by residues 141 to 144 (RLYS), 162 to 164 (CVK), Y168, 179 to 181 (VCS), and T220. The NADP(+) site is built by S144 and K164. NADP(+)-binding positions include T220, 252-253 (VP), 282-283 (SR), K292, 321-322 (GL), and E360.

It belongs to the ferredoxin--NADP reductase type 1 family. FAD is required as a cofactor.

It localises to the plastid. It is found in the chloroplast stroma. The protein localises to the chloroplast thylakoid membrane. The enzyme catalyses 2 reduced [2Fe-2S]-[ferredoxin] + NADP(+) + H(+) = 2 oxidized [2Fe-2S]-[ferredoxin] + NADPH. It functions in the pathway energy metabolism; photosynthesis. Its function is as follows. May play a key role in regulating the relative amounts of cyclic and non-cyclic electron flow to meet the demands of the plant for ATP and reducing power. This chain is Ferredoxin--NADP reductase, leaf-type isozyme, chloroplastic (PETH), found in Nicotiana tabacum (Common tobacco).